Here is a 349-residue protein sequence, read N- to C-terminus: MNQIIDHIAVIGGGAWGTALAQTSRRAGRRVTLWAREPEVARAINATHENPDFLPGVSLDPGLHATADLAEALRGAEAVLVVCPAQALRPVLTTARPLWPGRAPMVICAKGVEQGSGARMSEVATAVLPEAPLAVLSGPTFAREVAEGRPTAVTLACADGALAEALVLALGTRTFRPYASTDVVGAEIGGAVKNVLAIACGVVEGLGLGDNARAALLTRGLAEITRLGRALGARSETLSGLSGLGDLILTATSMQSRNFSLGFALGQGRTLDQVLGERRSVAEGVHTASAVVALAARWAIEMPICAAIHGVLSGDYDVTSAIESLLSRPLRVEGGSESQIHPTAKTATP.

NADPH contacts are provided by tryptophan 16, arginine 36, and lysine 110. Sn-glycerol 3-phosphate contacts are provided by lysine 110, glycine 138, and threonine 140. Position 142 (alanine 142) interacts with NADPH. 5 residues coordinate sn-glycerol 3-phosphate: lysine 193, aspartate 246, serine 256, arginine 257, and asparagine 258. The active-site Proton acceptor is lysine 193. An NADPH-binding site is contributed by arginine 257. Valine 281 and glutamate 283 together coordinate NADPH.

This sequence belongs to the NAD-dependent glycerol-3-phosphate dehydrogenase family.

The protein resides in the cytoplasm. It carries out the reaction sn-glycerol 3-phosphate + NAD(+) = dihydroxyacetone phosphate + NADH + H(+). It catalyses the reaction sn-glycerol 3-phosphate + NADP(+) = dihydroxyacetone phosphate + NADPH + H(+). It functions in the pathway membrane lipid metabolism; glycerophospholipid metabolism. Functionally, catalyzes the reduction of the glycolytic intermediate dihydroxyacetone phosphate (DHAP) to sn-glycerol 3-phosphate (G3P), the key precursor for phospholipid synthesis. The sequence is that of Glycerol-3-phosphate dehydrogenase [NAD(P)+] from Rhodospirillum rubrum (strain ATCC 11170 / ATH 1.1.1 / DSM 467 / LMG 4362 / NCIMB 8255 / S1).